Reading from the N-terminus, the 300-residue chain is 5'-adenylylsulfate reductase-like 5 (300 aa).

Positions 1–23 (MDSRVSILFVCAIAVSCFTSGSA) are cleaved as a signal peptide. The Thioredoxin domain occupies 41–161 (FDLEAKCPPS…LIEFYEEATG (121 aa)). The N-linked (GlcNAc...) asparagine glycan is linked to N136. Residues 202–222 (FLVLSLLFICLQMAILVFPIA) traverse the membrane as a helical segment.

The protein localises to the membrane. In Arabidopsis thaliana (Mouse-ear cress), this protein is 5'-adenylylsulfate reductase-like 5 (APRL5).